Consider the following 431-residue polypeptide: Intraflagellar transport protein 38 (431 aa).

Residues 177–218 are a coiled coil; that stretch reads SAAVQQRIKNLAAECNTLQEEVTTNKREKAKLEEQITQKKQS. Residues 346 to 431 form a disordered region; that stretch reads INTNAEIPDD…EELDPDNIEF (86 aa). Residues 352–370 are compositionally biased toward acidic residues; sequence IPDDESYSYSYEEEEEEEQ. A compositionally biased stretch (basic and acidic residues) spans 384–405; the sequence is PETHSNGEKHRGLDELSHKSNE. Positions 420–431 are enriched in acidic residues; that stretch reads GGEELDPDNIEF.

This sequence belongs to the CLUAP1 family.

It is found in the cell projection. The protein localises to the cilium. It localises to the flagellum. Its subcellular location is the cytoplasm. The protein resides in the cytoskeleton. It is found in the flagellum axoneme. The protein localises to the flagellum basal body. Its function is as follows. Component of the intraflagellar transport complex B (IFT-B) involved in flagellar assembly. This is Intraflagellar transport protein 38 from Giardia intestinalis (strain ATCC 50803 / WB clone C6) (Giardia lamblia).